The sequence spans 288 residues: Large ribosomal subunit protein uL2 (288 aa).

Over residues 29–43 the composition is skewed to basic and acidic residues; that stretch reads PEKSLTRGFKRDKGR. 2 disordered regions span residues 29–59 and 210–288; these read PEKSLTRGFKRDKGRNNRGVITSRRRGGGHK and GRNR…GRQS. 2 stretches are compositionally biased toward basic residues: residues 210–221 and 272–288; these read GRNRWKGRRPKV and VRRRKKSSKRGRGGRQS.

This sequence belongs to the universal ribosomal protein uL2 family. Part of the 50S ribosomal subunit. Forms a bridge to the 30S subunit in the 70S ribosome.

One of the primary rRNA binding proteins. Required for association of the 30S and 50S subunits to form the 70S ribosome, for tRNA binding and peptide bond formation. It has been suggested to have peptidyltransferase activity; this is somewhat controversial. Makes several contacts with the 16S rRNA in the 70S ribosome. In Thermosynechococcus vestitus (strain NIES-2133 / IAM M-273 / BP-1), this protein is Large ribosomal subunit protein uL2.